A 137-amino-acid polypeptide reads, in one-letter code: Large ribosomal subunit protein uL16 (137 aa).

It belongs to the universal ribosomal protein uL16 family. As to quaternary structure, part of the 50S ribosomal subunit.

Its function is as follows. Binds 23S rRNA and is also seen to make contacts with the A and possibly P site tRNAs. The sequence is that of Large ribosomal subunit protein uL16 from Paracoccus denitrificans (strain Pd 1222).